The following is a 496-amino-acid chain: UDP-N-acetylmuramate--L-alanine ligase (496 aa).

ATP is bound at residue 122–128 (GTHGKTT).

It belongs to the MurCDEF family.

The protein resides in the cytoplasm. It catalyses the reaction UDP-N-acetyl-alpha-D-muramate + L-alanine + ATP = UDP-N-acetyl-alpha-D-muramoyl-L-alanine + ADP + phosphate + H(+). Its pathway is cell wall biogenesis; peptidoglycan biosynthesis. In terms of biological role, cell wall formation. The polypeptide is UDP-N-acetylmuramate--L-alanine ligase (Mycobacterium avium (strain 104)).